A 154-amino-acid polypeptide reads, in one-letter code: Ribosome maturation factor RimP (154 aa).

Belongs to the RimP family.

Its subcellular location is the cytoplasm. Required for maturation of 30S ribosomal subunits. The sequence is that of Ribosome maturation factor RimP from Heliobacterium modesticaldum (strain ATCC 51547 / Ice1).